The chain runs to 1240 residues: Selection and upkeep of intraepithelial T-cells protein 6 (1240 aa).

The signal sequence occupies residues 1–24 (MGTIGVPLTAHCVVLFLLQMVALS). Topologically, residues 25–1086 (TEQFTVNGLE…CNKRNPFWKK (1062 aa)) are extracellular. The Ig-like V-type domain maps to 26–141 (EQFTVNGLES…EEHIIEVKVT (116 aa)). An intrachain disulfide couples cysteine 49 to cysteine 123. One can recognise an Ig-like C1-type domain in the interval 142–231 (ATSSDIQILM…FVTHQEESIS (90 aa)). Asparagine 155, asparagine 200, and asparagine 314 each carry an N-linked (GlcNAc...) asparagine glycan. A disulfide bridge connects residues cysteine 163 and cysteine 217. The chain crosses the membrane as a helical span at residues 1087 to 1107 (HALDLGISVFAIIVVTLIRHL). Topologically, residues 1108 to 1125 (NQREADQHFELDTLWSKD) are cytoplasmic. A helical transmembrane segment spans residues 1126–1146 (TSVILCVLIMFNNRLKALIYF). Residues 1147-1167 (RLYGYSPPGKTYKYIVNYILR) are Extracellular-facing. Residues 1168-1188 (FSQPLFFIVYSAIILVMHLQI) form a helical membrane-spanning segment. The Cytoplasmic segment spans residues 1189–1205 (QNTDSLFSLYNSWMVEM). Residues 1206 to 1226 (IMVLGLLLAIFNVKNIATALL) traverse the membrane as a helical segment. At 1227–1240 (HLGRTTLRLFRIKD) the chain is on the extracellular side.

This sequence belongs to the SKINT family. As to expression, expressed in skin.

The protein resides in the membrane. May act by engaging a cell surface molecule on immature T-cells in the embryonic thymus. The sequence is that of Selection and upkeep of intraepithelial T-cells protein 6 (Skint6) from Mus musculus (Mouse).